A 1057-amino-acid polypeptide reads, in one-letter code: Atrial natriuretic peptide receptor 1 (1057 aa).

A signal peptide spans 1–28 (MPGSRRVRPRLRALLLLPPLLLLRSGHA). The Extracellular segment spans residues 29–469 (SDLTVAVVLP…CNQDHFSTLE (441 aa)). An N-linked (GlcNAc...) asparagine glycan is attached at Asn41. 3 residues coordinate chloride: Ser81, Gly113, and Cys114. Cystine bridges form between Cys88–Cys114 and Cys192–Cys241. N-linked (GlcNAc...) asparagine glycosylation is found at Asn208, Asn334, Asn375, Asn382, and Asn423. Cys451 and Cys460 are oxidised to a cystine. Residues 470–490 (VLALVGSLSLVSFLIVSFFIY) form a helical membrane-spanning segment. The Cytoplasmic portion of the chain corresponds to 491–1057 (RKMQLEKELV…LGERGCSTRG (567 aa)). Phosphoserine occurs at positions 515 and 525. Residues 524–801 (GSRLTLSGRG…QIRLALRKFN (278 aa)) enclose the Protein kinase domain. Thr528 is modified (phosphothreonine). Residues Ser530, Ser534, and Ser538 each carry the phosphoserine modification. Residue Thr541 is modified to Phosphothreonine. Residues 872 to 1002 (TIYFSDIVGF…DTVNTASRME (131 aa)) form the Guanylate cyclase domain.

It belongs to the adenylyl cyclase class-4/guanylyl cyclase family. Homodimer. Phosphorylation of the protein kinase-like domain is required for full activation by ANP.

The protein resides in the membrane. The enzyme catalyses GTP = 3',5'-cyclic GMP + diphosphate. Receptor for the atrial natriuretic peptide NPPA/ANP and the brain natriuretic peptide NPPB/BNP which are potent vasoactive hormones playing a key role in cardiovascular homeostasis. Plays an essential role in the regulation of endothelial cell senescence and vascular aging. Upon activation by ANP or BNP, stimulates the production of cyclic guanosine monophosphate (cGMP) that promotes vascular tone and volume homeostasis by activation of protein kinase cGMP-dependent 1/PRKG1 and subsequently PRKAA1, thereby controlling blood pressure and maintaining cardiovascular homeostasis. In Mus musculus (Mouse), this protein is Atrial natriuretic peptide receptor 1 (Npr1).